The following is a 245-amino-acid chain: tRNA pseudouridine synthase A (245 aa).

The active-site Nucleophile is Asp-52. Tyr-111 provides a ligand contact to substrate.

The protein belongs to the tRNA pseudouridine synthase TruA family. In terms of assembly, homodimer.

The enzyme catalyses uridine(38/39/40) in tRNA = pseudouridine(38/39/40) in tRNA. Formation of pseudouridine at positions 38, 39 and 40 in the anticodon stem and loop of transfer RNAs. The chain is tRNA pseudouridine synthase A from Rickettsia canadensis (strain McKiel).